The chain runs to 257 residues: Phosphonates import ATP-binding protein PhnC (257 aa).

In terms of domain architecture, ABC transporter spans 4–248; it reads IEFKDVNKVY…VFNDIYGRKL (245 aa). ATP is bound at residue 37-44; sequence GLSGAGKS.

Belongs to the ABC transporter superfamily. Phosphonates importer (TC 3.A.1.9.1) family. As to quaternary structure, the complex is composed of two ATP-binding proteins (PhnC), two transmembrane proteins (PhnE) and a solute-binding protein (PhnD).

The protein localises to the cell membrane. It catalyses the reaction phosphonate(out) + ATP + H2O = phosphonate(in) + ADP + phosphate + H(+). Its function is as follows. Part of the ABC transporter complex PhnCDE involved in phosphonates import. Responsible for energy coupling to the transport system. In Staphylococcus haemolyticus (strain JCSC1435), this protein is Phosphonates import ATP-binding protein PhnC.